The following is a 361-amino-acid chain: Mycothiol acetyltransferase (361 aa).

N-acetyltransferase domains are found at residues 25-173 and 195-361; these read PRVR…LPGS and VTVL…AWKF. Glu-59 is a 1D-myo-inositol 2-(L-cysteinylamino)-2-deoxy-alpha-D-glucopyranoside binding site. An acetyl-CoA-binding site is contributed by 98 to 100; the sequence is LAV. 1D-myo-inositol 2-(L-cysteinylamino)-2-deoxy-alpha-D-glucopyranoside contacts are provided by Glu-229, Lys-280, and Glu-295. Residues 299–301 and 306–312 contribute to the acetyl-CoA site; these read IGL and QGRGLGR. Position 333 (Tyr-333) interacts with 1D-myo-inositol 2-(L-cysteinylamino)-2-deoxy-alpha-D-glucopyranoside. 338-343 lines the acetyl-CoA pocket; the sequence is NAPAVH.

This sequence belongs to the acetyltransferase family. MshD subfamily. As to quaternary structure, monomer.

The enzyme catalyses 1D-myo-inositol 2-(L-cysteinylamino)-2-deoxy-alpha-D-glucopyranoside + acetyl-CoA = mycothiol + CoA + H(+). Functionally, catalyzes the transfer of acetyl from acetyl-CoA to desacetylmycothiol (Cys-GlcN-Ins) to form mycothiol. In Corynebacterium kroppenstedtii (strain DSM 44385 / JCM 11950 / CIP 105744 / CCUG 35717), this protein is Mycothiol acetyltransferase.